Reading from the N-terminus, the 325-residue chain is Aspartate carbamoyltransferase catalytic subunit (325 aa).

Carbamoyl phosphate-binding residues include arginine 64 and threonine 65. Lysine 92 contacts L-aspartate. Residues arginine 114, histidine 142, and glutamine 145 each coordinate carbamoyl phosphate. Positions 176 and 230 each coordinate L-aspartate. Glycine 271 and proline 272 together coordinate carbamoyl phosphate.

The protein belongs to the aspartate/ornithine carbamoyltransferase superfamily. ATCase family. In terms of assembly, heterododecamer (2C3:3R2) of six catalytic PyrB chains organized as two trimers (C3), and six regulatory PyrI chains organized as three dimers (R2).

The catalysed reaction is carbamoyl phosphate + L-aspartate = N-carbamoyl-L-aspartate + phosphate + H(+). It participates in pyrimidine metabolism; UMP biosynthesis via de novo pathway; (S)-dihydroorotate from bicarbonate: step 2/3. Catalyzes the condensation of carbamoyl phosphate and aspartate to form carbamoyl aspartate and inorganic phosphate, the committed step in the de novo pyrimidine nucleotide biosynthesis pathway. This chain is Aspartate carbamoyltransferase catalytic subunit, found in Nitratidesulfovibrio vulgaris (strain DSM 19637 / Miyazaki F) (Desulfovibrio vulgaris).